A 622-amino-acid polypeptide reads, in one-letter code: Palmitoyltransferase pfa3 (622 aa).

The Cytoplasmic segment spans residues 1–38; sequence MDATPYTTSSTSTALDSPSSLSATMARRWARKLERYCC. A helical membrane pass occupies residues 39-59; the sequence is TCVTYFPLAFVYSMTSWAAYV. The Vacuolar portion of the chain corresponds to 60–76; that stretch reads DVSLSTTPSRVTWLGHS. A helical membrane pass occupies residues 77-97; the sequence is YGFIAVVLYLLANWCYTYAVF. Residues 98-175 lie on the Cytoplasmic side of the membrane; that stretch reads TSPGSTTNEY…ATCVGLRNHK (78 aa). Residues 132–182 form the DHHC domain; sequence RFCKKCQARKPDRAHHCSTCRRCVLKMDHHCPWLATCVGLRNHKAFLLFLI. The chain crosses the membrane as a helical span at residues 176–196; it reads AFLLFLIYTSVFCWVSFAGSA. Residues 197-217 lie on the Vacuolar side of the membrane; the sequence is SWVWEEIMSNTTYVETLMPVN. The helical transmembrane segment at 218-238 threads the bilayer; that stretch reads YIMLSVISGIIGIVLSAFCGW. At 239–622 the chain is on the cytoplasmic side; the sequence is HIYLASRGQT…EGRSNDDGVD (384 aa). 3 disordered regions span residues 298 to 334, 419 to 507, and 533 to 622; these read PGVTRPEEGEEMRRMTTPSGSSQRNDLASQHNPELQA, REEQ…YADD, and DDVL…DGVD. Residues 302-311 are compositionally biased toward basic and acidic residues; it reads RPEEGEEMRR. Residues 313-330 show a composition bias toward polar residues; sequence TTPSGSSQRNDLASQHNP. A compositionally biased stretch (basic and acidic residues) spans 419–428; it reads REEQRQRERQ. A compositionally biased stretch (polar residues) spans 443–455; that stretch reads YTPTWTPPNQQHP. Low complexity predominate over residues 466 to 488; sequence PSSQPQTQRNSNSSSPSFTPSRR. Residues 533–547 are compositionally biased toward acidic residues; that stretch reads DDVLNDDDDDDEDYF. A compositionally biased stretch (basic and acidic residues) spans 610–622; that stretch reads NGEEGRSNDDGVD.

The protein belongs to the DHHC palmitoyltransferase family. PFA3 subfamily. Autopalmitoylated.

It is found in the vacuole membrane. It carries out the reaction L-cysteinyl-[protein] + hexadecanoyl-CoA = S-hexadecanoyl-L-cysteinyl-[protein] + CoA. Palmitoyltransferase specific for vac8. Palmitoylates vac8 at one or more of its N-terminal cysteine residues, which is required for its proper membrane localization. This chain is Palmitoyltransferase pfa3 (ptr-3), found in Neurospora crassa (strain ATCC 24698 / 74-OR23-1A / CBS 708.71 / DSM 1257 / FGSC 987).